A 592-amino-acid chain; its full sequence is Aspartate--tRNA(Asp/Asn) ligase (592 aa).

An L-aspartate-binding site is contributed by E176. The aspartate stretch occupies residues 200–203 (QIFK). R222 provides a ligand contact to L-aspartate. Residues 222 to 224 (RDE) and Q231 contribute to the ATP site. H450 contributes to the L-aspartate binding site. E484 contacts ATP. Residue R491 coordinates L-aspartate. Residue 536 to 539 (GLDR) participates in ATP binding.

This sequence belongs to the class-II aminoacyl-tRNA synthetase family. Type 1 subfamily. Homodimer.

Its subcellular location is the cytoplasm. It carries out the reaction tRNA(Asx) + L-aspartate + ATP = L-aspartyl-tRNA(Asx) + AMP + diphosphate. In terms of biological role, aspartyl-tRNA synthetase with relaxed tRNA specificity since it is able to aspartylate not only its cognate tRNA(Asp) but also tRNA(Asn). Reaction proceeds in two steps: L-aspartate is first activated by ATP to form Asp-AMP and then transferred to the acceptor end of tRNA(Asp/Asn). The sequence is that of Aspartate--tRNA(Asp/Asn) ligase from Anoxybacillus flavithermus (strain DSM 21510 / WK1).